A 639-amino-acid chain; its full sequence is MKIINLGILAHVDAGKTTLTESLLYTSGAIAELGSVDEGTTRTDTMNLERQRGITIQTAVTSFQWEDVKVNIIDTPGHMDFLAEVYRSLSVLDGAVLLVSAKDGIQAQTRILFHALQIMKIPTIFFINKIDQEGIDLPMVYREMKAKLSSEIIVKQKVGQHPHINVTDNDDMEQWDAVIMGNDELLEKYMSGKPFKMSELEQEENRRFQNGTLFPVYHGSAKNNLGTRQLIEVIASKFYSSTPEGQSELCGQVFKIEYSEKRRRFVYVRIYSGTLHLRDVIRISEKEKIKITEMYVPTNGELYSSDTACSGDIVILPNDVLQLNSILGNEILLPQRKFIENPLPMIQTTIAVKKSEQREILLGALTEISDCDPLLKYYVDTTTHEIILSFLGNVQMEVICAILEEKYHVEAEIKEPTVIYMERPLRKAEYTIHIEVPPNPFWASVGLSIEPLPIGSGVQYESRVSLGYLNQSFQNAVMEGVLYGCEQGLYGWKVTDCKICFEYGLYYSPVSTPADFRLLSPIVLEQALKKAGTELLEPYLHFEIYAPQEYLSRAYHDAPRYCADIVSTQIKNDEVILKGEIPARCIQEYRNDLTYFTNGQGVCLTELKGYQPAIGKFICQPRRPNSRIDKVRHMFHKLA.

A tr-type G domain is found at 1–244; the sequence is MKIINLGILA…ASKFYSSTPE (244 aa). Residues 10–17, 74–78, and 128–131 each bind GTP; these read AHVDAGKT, DTPGH, and NKID.

The protein belongs to the TRAFAC class translation factor GTPase superfamily. Classic translation factor GTPase family. TetM/TetO subfamily.

Functionally, abolishes the inhibitory effect of tetracyclin on protein synthesis by a non-covalent modification of the ribosomes. The protein is Tetracycline resistance protein TetO (tetO) of Campylobacter jejuni.